Reading from the N-terminus, the 449-residue chain is Xylose isomerase (449 aa).

Active-site residues include H101 and D104. Residues E232, E268, H271, D296, D307, D309, and D340 each coordinate Mg(2+).

Belongs to the xylose isomerase family. Homotetramer. Requires Mg(2+) as cofactor.

The protein localises to the cytoplasm. The enzyme catalyses alpha-D-xylose = alpha-D-xylulofuranose. The sequence is that of Xylose isomerase from Bifidobacterium longum (strain DJO10A).